The chain runs to 1085 residues: MSTPSRFKKDKEIIAEYESQVKEIRAQLVEQQKCLEQQTEMRVQLLQDLQDFFRKKAEIETEYSRNLEKLAERFMAKTRSTKDHQQYKKDQNLLSPVNCWYLLLNQVRRESKDHATLSDIYLNNVIMRFMQISEDSTRMFKKSKEIAFQLHEDLMKVLNELYTVMKTYHMYHAESISAESKLKEAEKQEEKQIGRSGDPVFHIRLEERHQRRSSVKKIEKMKEKRQAKYSENKLKSIKARNEYLLTLEATNASVFKYYIHDLSDLIDCCDLGYHASLNRALRTYLSAEYNLETSRHEGLDIIENAVDNLEPRSDKQRFMEMYPAAFCPPMKFEFQSHMGDEVCQVSAQQPVQAELMLRYQQLQSRLATLKIENEEVKKTTEATLQTIQDMVTIEDYDVSECFQHSRSTESVKSTVSETYLSKPSIAKRRANQQETEQFYFMKLREYLEGSNLITKLQAKHDLLQRTLGEGHRAEYMTTRPPNVPPKPQKHRKSRPRSQYNTKLFNGDLETFVKDSGQVIPLIVESCIRFINLYGLQHQGIFRVSGSQVEVNDIKNSFERGENPLADDQSNHDINSVAGVLKLYFRGLENPLFPKERFNDLISCIRIDNLYERALHIRKLLLTLPRSVLIVMRYLFAFLNHLSQYSDENMMDPYNLAICFGPTLMPVPEIQDQVSCQAHVNEIIKTIIIHHETIFPDAKELDGPVYEKCMAGDDYCDSPYSEHGTLEEVDQDAGTEPHTSEDECEPIEAIAKFDYVGRSARELSFKKGASLLLYHRASEDWWEGRHNGIDGLVPHQYIVVQDMDDTFSDTLSQKADSEASSGPVTEDKSSSKDMNSPTDRHPDGYLARQRKRGEPPPPVRRPGRTSDGHCPLHPPHALSNSSVDLGSPSLASHPRGLLQNRGLNNDSPERRRRPGHGSLTNISRHDSLKKIDSPPIRRSTSSGQYTGFNDHKPLDPETIAQDIEETMNTALNELRELERQSTAKHAPDVVLDTLEQVKNSPTPATSTESLSPLHNVALRSSEPQIRRSTSSSSDTMSTFKPMVAPRMGVQLKPPALRPKPAVLPKTNPTIGPAPPPQGPTDKSCTM.

Residues 19 to 314 enclose the F-BAR domain; sequence SQVKEIRAQL…AVDNLEPRSD (296 aa). A coiled-coil region spans residues 351–390; sequence VQAELMLRYQQLQSRLATLKIENEEVKKTTEATLQTIQDM. At Ser416 the chain carries Phosphoserine. Positions 475-496 are disordered; that stretch reads YMTTRPPNVPPKPQKHRKSRPR. The 189-residue stretch at 506–694 folds into the Rho-GAP domain; that stretch reads GDLETFVKDS…TIIIHHETIF (189 aa). The SH3 domain occupies 743-802; the sequence is CEPIEAIAKFDYVGRSARELSFKKGASLLLYHRASEDWWEGRHNGIDGLVPHQYIVVQDM. Polar residues predominate over residues 808–822; that stretch reads DTLSQKADSEASSGP. Residues 808–954 are disordered; sequence DTLSQKADSE…TGFNDHKPLD (147 aa). Phosphoserine occurs at positions 835 and 917. The span at 922 to 931 shows a compositional bias: basic and acidic residues; it reads SRHDSLKKID. Position 932 is a phosphoserine (Ser932). Positions 937–946 are enriched in polar residues; that stretch reads RSTSSGQYTG. Positions 956–985 form a coiled coil; sequence ETIAQDIEETMNTALNELRELERQSTAKHA. Positions 997–1011 are enriched in polar residues; that stretch reads KNSPTPATSTESLSP. 2 disordered regions span residues 997–1038 and 1051–1085; these read KNSP…MSTF and KPPALRPKPAVLPKTNPTIGPAPPPQGPTDKSCTM. Residue Ser999 is modified to Phosphoserine. Phosphothreonine is present on Thr1001. The span at 1027–1037 shows a compositional bias: low complexity; sequence STSSSSDTMST. Ser1032 bears the Phosphoserine mark.

Homodimer. Forms a heterooligomer with SRGAP2 and SRGAP3 through its F-BAR domain. Interacts with ROBO1, CDC42 and RHOA. Interacts with FASLG. Expressed in brain, lung, kidney, and testis.

GTPase-activating protein for RhoA and Cdc42 small GTPases. Together with CDC42 seems to be involved in the pathway mediating the repulsive signaling of Robo and Slit proteins in neuronal migration. SLIT2, probably through interaction with ROBO1, increases the interaction of SRGAP1 with ROBO1 and inactivates CDC42. This Homo sapiens (Human) protein is SLIT-ROBO Rho GTPase-activating protein 1 (SRGAP1).